Consider the following 595-residue polypeptide: MHRYRSHTCAALRKTDVGSNVRLSGWVHRVRDHGGILFIDLRDHYGITQIVADPDSPAFKVAETVRGEWVIRVDGEVKARAGDAVNTNLPTGEVEIFATEIEVLAAAKELPLPVFGEPDYPEDIRLKYRFLDLRRETLHKNIMSRTKIIAAMRRRMTEIGFNEFTTPILTASSPEGARDFLVPSRIHEGKFYALPQAPQQYKQLLMVAGFDRYFQIAPCFRDEDPRADRLPGEFYQLDLEMSFVTQEEVWETMEPVMRGIFEEFAEGKPVTQQFRRIAYDDAIRTYGSDKPDLRNPIEMQAVTEHFAGSGFKVFANMIANDPKVEVWAIPAKTGGSRAFCDRMNSWAQSEGQPGLGYIFWRKEGDKLEGAGPIAKNIGEERTEAIRTQMGLEDGDACFFVAGLPSKFYKFAGDARTRAGEELNLVDRDRFELAWIIDFPFYEWDEDNKKLDFAHNPFSMPQGGMDALENQDPLAIKAYQYDLVCNGFEIASGSIRNQLPDVMVKAFEKVGLSQQDVEERFGGLYRAFQYGAPPHGGMAAGIDRVIMLLVGAKNLREISLFPMNQQALDLLMNAPSDVSPAQLRDLHIRLAPVQKS.

Glutamate 175 serves as a coordination point for L-aspartate. Positions 199–202 (QQYK) are aspartate. Residues arginine 221 and histidine 454 each contribute to the L-aspartate site. An ATP-binding site is contributed by 221–223 (RDE). Glutamate 488 is a binding site for ATP. Residue arginine 495 coordinates L-aspartate. 540–543 (GIDR) contributes to the ATP binding site.

This sequence belongs to the class-II aminoacyl-tRNA synthetase family. Type 1 subfamily. Homodimer.

The protein resides in the cytoplasm. The enzyme catalyses tRNA(Asx) + L-aspartate + ATP = L-aspartyl-tRNA(Asx) + AMP + diphosphate. Aspartyl-tRNA synthetase with relaxed tRNA specificity since it is able to aspartylate not only its cognate tRNA(Asp) but also tRNA(Asn). Reaction proceeds in two steps: L-aspartate is first activated by ATP to form Asp-AMP and then transferred to the acceptor end of tRNA(Asp/Asn). The polypeptide is Aspartate--tRNA(Asp/Asn) ligase (Brucella anthropi (strain ATCC 49188 / DSM 6882 / CCUG 24695 / JCM 21032 / LMG 3331 / NBRC 15819 / NCTC 12168 / Alc 37) (Ochrobactrum anthropi)).